The chain runs to 518 residues: Ethanolamine kinase (518 aa).

Positions 1 to 19 (MGTETKSNSYTGQISTSGG) are enriched in polar residues. Positions 1–88 (MGTETKSNSY…DIRAKPEDKS (88 aa)) are disordered. Residues 33 to 68 (QTVNQQTLSLSQSNQVQNQLNSHSNSNSYPNPSGSE) show a composition bias toward low complexity. Residues 69-88 (NKNENEQNSRDIRAKPEDKS) show a composition bias toward basic and acidic residues. Phosphoserine is present on residues Ser-190 and Ser-194.

It belongs to the choline/ethanolamine kinase family.

Its subcellular location is the cytoplasm. The enzyme catalyses ethanolamine + ATP = phosphoethanolamine + ADP + H(+). Its pathway is phospholipid metabolism; phosphatidylethanolamine biosynthesis; phosphatidylethanolamine from ethanolamine: step 1/3. Functionally, highly specific for ethanolamine phosphorylation. May be a rate-controlling step in phosphatidylethanolamine biosynthesis. This is Ethanolamine kinase (eas) from Drosophila melanogaster (Fruit fly).